Reading from the N-terminus, the 453-residue chain is Glutamyl-tRNA reductase (453 aa).

Residues Thr52–Arg55, Ser105, Glu110–Gln112, and Gln116 each bind substrate. Residue Cys53 is the Nucleophile of the active site. Position 184 to 189 (Gly184 to Ala189) interacts with NADP(+). The segment covering Pro413 to Thr424 has biased composition (low complexity). The segment at Pro413 to Asp453 is disordered.

This sequence belongs to the glutamyl-tRNA reductase family. As to quaternary structure, homodimer.

It catalyses the reaction (S)-4-amino-5-oxopentanoate + tRNA(Glu) + NADP(+) = L-glutamyl-tRNA(Glu) + NADPH + H(+). It functions in the pathway porphyrin-containing compound metabolism; protoporphyrin-IX biosynthesis; 5-aminolevulinate from L-glutamyl-tRNA(Glu): step 1/2. In terms of biological role, catalyzes the NADPH-dependent reduction of glutamyl-tRNA(Glu) to glutamate 1-semialdehyde (GSA). This is Glutamyl-tRNA reductase from Natronomonas pharaonis (strain ATCC 35678 / DSM 2160 / CIP 103997 / JCM 8858 / NBRC 14720 / NCIMB 2260 / Gabara) (Halobacterium pharaonis).